Consider the following 631-residue polypeptide: tRNA uridine 5-carboxymethylaminomethyl modification enzyme MnmG (631 aa).

Residues 13–18 (GGGHAG), Val125, and Ser180 each bind FAD. Residue 273-287 (GPRYCPSIEDKVMRF) participates in NAD(+) binding. FAD is bound at residue Gln370.

Belongs to the MnmG family. Homodimer. Heterotetramer of two MnmE and two MnmG subunits. FAD is required as a cofactor.

The protein localises to the cytoplasm. Functionally, NAD-binding protein involved in the addition of a carboxymethylaminomethyl (cmnm) group at the wobble position (U34) of certain tRNAs, forming tRNA-cmnm(5)s(2)U34. The polypeptide is tRNA uridine 5-carboxymethylaminomethyl modification enzyme MnmG (Vibrio atlanticus (strain LGP32) (Vibrio splendidus (strain Mel32))).